We begin with the raw amino-acid sequence, 412 residues long: CCA-adding enzyme (412 aa).

Residues Ser-41 and Lys-44 each coordinate ATP. Ser-41 and Lys-44 together coordinate CTP. Mg(2+)-binding residues include Asp-53, Asp-55, and Asp-106. Positions 129, 149, and 158 each coordinate ATP. Residues His-129, Lys-149, and Tyr-158 each coordinate CTP.

This sequence belongs to the tRNA nucleotidyltransferase/poly(A) polymerase family. Archaeal CCA-adding enzyme subfamily. As to quaternary structure, homodimer. The cofactor is Mg(2+).

The enzyme catalyses a tRNA precursor + 2 CTP + ATP = a tRNA with a 3' CCA end + 3 diphosphate. It carries out the reaction a tRNA with a 3' CCA end + 2 CTP + ATP = a tRNA with a 3' CCACCA end + 3 diphosphate. In terms of biological role, catalyzes the addition and repair of the essential 3'-terminal CCA sequence in tRNAs without using a nucleic acid template. Adds these three nucleotides in the order of C, C, and A to the tRNA nucleotide-73, using CTP and ATP as substrates and producing inorganic pyrophosphate. tRNA 3'-terminal CCA addition is required both for tRNA processing and repair. Also involved in tRNA surveillance by mediating tandem CCA addition to generate a CCACCA at the 3' terminus of unstable tRNAs. While stable tRNAs receive only 3'-terminal CCA, unstable tRNAs are marked with CCACCA and rapidly degraded. The protein is CCA-adding enzyme of Saccharolobus islandicus (strain Y.N.15.51 / Yellowstone #2) (Sulfolobus islandicus).